A 482-amino-acid chain; its full sequence is G-protein coupled receptor 37-like 1 (482 aa).

A signal peptide spans 1–25 (MRWLWPLGVSLAVALAAGPERAPRG). Disordered regions lie at residues 25 to 56 (GVWL…AKGL) and 78 to 119 (PTQP…VQNP). Over 26–134 (VWLQQGGHQP…ERSYGAYAVL (109 aa)) the chain is Extracellular. Residues 40 to 54 (QPDRSRRGAEREDAK) show a composition bias toward basic and acidic residues. Residue N105 is glycosylated (N-linked (GlcNAc...) asparagine). The helical transmembrane segment at 135-155 (LLALLLFAVGIVGSLAVMCIV) threads the bilayer. Over 156-167 (WHSYYLKSAWNS) the chain is Cytoplasmic. The helical transmembrane segment at 168–188 (VLASLALWDFLVLFFCLPVVT) threads the bilayer. Residues 189-205 (FHEITKQRLLGAVSCRA) lie on the Extracellular side of the membrane. C203 and C286 are disulfide-bonded. Residues 206–226 (VPFVEVSSLGVTTFSLCALGI) traverse the membrane as a helical segment. Residues 227–251 (DRFHVATSTLPKARPIEPCPSILAK) are Cytoplasmic-facing. A helical transmembrane segment spans residues 252 to 272 (LAVIWVGSMTLAAPELLLWQL). Residues 273 to 310 (VREPSPAAGTVDTCIMKPSAHLPESLYSLVLTYQNARM) are Extracellular-facing. A helical transmembrane segment spans residues 311–331 (WWSFGCYFCLPVLFTVTCQLV). Over 332–361 (TWRVRGTPGRKPESRPGPQEPRGARPSSTV) the chain is Cytoplasmic. Residues 338–358 (TPGRKPESRPGPQEPRGARPS) are disordered. Residues 362 to 382 (AGLAAVHALCALPENVCNVVA) traverse the membrane as a helical segment. The Extracellular portion of the chain corresponds to 383–398 (AYLSAALTRQTLELLG). The chain crosses the membrane as a helical span at residues 399 to 419 (LVTQFSTFFKAALTPLLLLCV). Residues 420–482 (SRPLGRAFLD…PPLLALGTPC (63 aa)) lie on the Cytoplasmic side of the membrane. At T480 the chain carries Phosphothreonine.

Belongs to the G-protein coupled receptor 1 family. As to quaternary structure, interacts with the PTCH1 receptor. Post-translationally, undergoes metalloprotease-mediated cleavage which reduces its constitutive activity. In terms of processing, ubiquitinated.

The protein localises to the cell membrane. It is found in the cell projection. Its subcellular location is the cilium membrane. In terms of biological role, G-protein coupled receptor. Has been shown to bind the neuroprotective and glioprotective factor prosaposin (PSAP), leading to endocytosis followed by an ERK phosphorylation cascade. However, other studies have shown that prosaposin does not increase activity. It has been suggested that GPR37L1 is a constitutively active receptor which signals through the guanine nucleotide-binding protein G(s) subunit alpha. Participates in the regulation of postnatal cerebellar development by modulating the Shh pathway. Regulates baseline blood pressure in females and protects against cardiovascular stress in males. Mediates inhibition of astrocyte glutamate transporters and reduction in neuronal N-methyl-D-aspartate receptor activity. In Bos taurus (Bovine), this protein is G-protein coupled receptor 37-like 1 (GPR37L1).